A 293-amino-acid chain; its full sequence is Glutamine sensor pib2 (293 aa).

The interval 38-75 (APTRQATNGTGSVSGSPNSSSNSTPANQGSLPSHTNPQ) is disordered. Over residues 44–62 (TNGTGSVSGSPNSSSNSTP) the composition is skewed to low complexity. The segment covering 63-75 (ANQGSLPSHTNPQ) has biased composition (polar residues). An FYVE-type; degenerate zinc finger spans residues 156–220 (DVSVCSFPSC…SCVSCFYEYL (65 aa)). Zn(2+)-binding residues include Cys-178, Cys-181, Cys-212, and Cys-215. The segment covering 242–256 (APQQATTHPPSQPKN) has biased composition (polar residues). The tract at residues 242–276 (APQQATTHPPSQPKNAVSVPIPKMDSTDSKGELPS) is disordered. Ser-259 is subject to Phosphoserine.

As to quaternary structure, interacts with the TORC1 complex when activated by glutamine or cysteine.

The protein resides in the vacuole membrane. With respect to regulation, activated by glutamine. Its function is as follows. Functions as an intracellular glutamine sensor that directly activates the TORC1 signaling pathway, to promote cell growth when glutamine is available. This Schizosaccharomyces pombe (strain 972 / ATCC 24843) (Fission yeast) protein is Glutamine sensor pib2.